We begin with the raw amino-acid sequence, 150 residues long: PTS system galactitol-specific EIIA component (150 aa).

In terms of domain architecture, PTS EIIA type-2 spans 1 to 144 (MTNLFVRSGI…TQLKEYFTKY (144 aa)). H62 acts as the Tele-phosphohistidine intermediate in catalysis. Residue H62 is modified to Phosphohistidine; by HPr.

Forms a complex with one each of subunit of GatA, GatB and 2 subunits of GatC.

The protein resides in the cytoplasm. Functionally, the phosphoenolpyruvate-dependent sugar phosphotransferase system (sugar PTS), a major carbohydrate active transport system, catalyzes the phosphorylation of incoming sugar substrates concomitantly with their translocation across the cell membrane. The enzyme II complex composed of GatA, GatB and GatC is involved in galactitol transport. The protein is PTS system galactitol-specific EIIA component (gatA) of Escherichia coli O157:H7.